We begin with the raw amino-acid sequence, 83 residues long: Exodeoxyribonuclease 7 small subunit (83 aa).

The protein belongs to the XseB family. Heterooligomer composed of large and small subunits.

The protein resides in the cytoplasm. It carries out the reaction Exonucleolytic cleavage in either 5'- to 3'- or 3'- to 5'-direction to yield nucleoside 5'-phosphates.. Its function is as follows. Bidirectionally degrades single-stranded DNA into large acid-insoluble oligonucleotides, which are then degraded further into small acid-soluble oligonucleotides. The protein is Exodeoxyribonuclease 7 small subunit of Rhodopseudomonas palustris (strain ATCC BAA-98 / CGA009).